Consider the following 135-residue polypeptide: SGGLQVKNFDFTVGKFLTVGGFINNSPQRFSVNVGESMNSLSLHLDHRFNYGADQNTIVMNSTLKGDNGWETEQRSTNFTLSAGQYFEITLSYDINKFYIDILDGPNLEFPNRYSKEFLPFLSLAGDARLTLVKE.

Serine 1 carries the post-translational modification N-acetylserine. One can recognise a Galectin domain in the interval 3 to 135; that stretch reads GLQVKNFDFT…GDARLTLVKE (133 aa). Residue 70–76 participates in a beta-D-galactoside binding; the sequence is WETEQRS.

As to quaternary structure, homodimer.

Its function is as follows. This protein binds beta-galactoside. Its physiological function is not yet known. The chain is Congerin-1 from Conger myriaster (Conger eel).